Here is a 304-residue protein sequence, read N- to C-terminus: Putative F-box/LRR-repeat protein 21 (304 aa).

An F-box domain is found at 43–90 (RRNWVDLPPELTTSILLRLSLTDILDNAQKVCKEWRRICKDPSMWRKI). 4 LRR repeats span residues 132-159 (LSYI…GVVN), 173-198 (THSC…KLNS), 218-241 (GPLE…HLQL), and 243-268 (ANRL…DVRK).

The protein is Putative F-box/LRR-repeat protein 21 (FBL21) of Arabidopsis thaliana (Mouse-ear cress).